Consider the following 293-residue polypeptide: Fructose-bisphosphate aldolase class 1 (293 aa).

The active-site Proton acceptor is the E176. Residue K211 is the Schiff-base intermediate with dihydroxyacetone-P of the active site.

This sequence belongs to the class I fructose-bisphosphate aldolase family.

It carries out the reaction beta-D-fructose 1,6-bisphosphate = D-glyceraldehyde 3-phosphate + dihydroxyacetone phosphate. It functions in the pathway carbohydrate degradation; glycolysis; D-glyceraldehyde 3-phosphate and glycerone phosphate from D-glucose: step 4/4. The chain is Fructose-bisphosphate aldolase class 1 from Porphyromonas gingivalis (strain ATCC 33277 / DSM 20709 / CIP 103683 / JCM 12257 / NCTC 11834 / 2561).